The chain runs to 526 residues: Plant intracellular Ras-group-related LRR protein 5 (526 aa).

LRR repeat units lie at residues 229-252 (LSSLVRLDLSENCIMVLPATIGGL), 253-275 (ISLTRLDLHSNRIGQLPESIGDL), 276-297 (LNLVNLNLSGNQLSSLPSSFNR), 298-321 (LIHLEELDLSSNSLSILPESIGSL), 323-344 (SLKKLDVETNNIEEIPHSISGC), 346-367 (SMEELRADYNRLKALPEAVGKL), 368-390 (STLEILTVRYNNIRQLPTTMSSM), 391-414 (ANLKELDVSFNELESVPESLCYAK), 416-437 (LVKLNIGNNFANLRSLPGLIGN), 438-463 (LEKLEELDMSNNQIRFLPYSFKTLSN), and 465-484 (RVLQTEQNPLEELPRDITEK). The GVYW; degenerate motif lies at 485 to 492 (GAQAVVQY).

It belongs to the SHOC2 family. As to expression, widely expressed but preferentially in roots.

Functionally, leucine-rich repeat protein that likely mediates protein interactions, possibly in the context of signal transduction. The polypeptide is Plant intracellular Ras-group-related LRR protein 5 (PIRL5) (Arabidopsis thaliana (Mouse-ear cress)).